We begin with the raw amino-acid sequence, 122 residues long: Small ribosomal subunit protein uS13 (122 aa).

Residues 95-122 (GLPVRGQRTHTNARTRKGPAKPIAGKKK) are disordered.

The protein belongs to the universal ribosomal protein uS13 family. In terms of assembly, part of the 30S ribosomal subunit. Forms a loose heterodimer with protein S19. Forms two bridges to the 50S subunit in the 70S ribosome.

Its function is as follows. Located at the top of the head of the 30S subunit, it contacts several helices of the 16S rRNA. In the 70S ribosome it contacts the 23S rRNA (bridge B1a) and protein L5 of the 50S subunit (bridge B1b), connecting the 2 subunits; these bridges are implicated in subunit movement. Contacts the tRNAs in the A and P-sites. In Xanthobacter autotrophicus (strain ATCC BAA-1158 / Py2), this protein is Small ribosomal subunit protein uS13.